The sequence spans 367 residues: Glutamate 5-kinase (367 aa).

Residue Lys10 coordinates ATP. The substrate site is built by Ser50, Asp137, and Asn149. Residues Thr169–Asp170 and Thr211–Lys217 contribute to the ATP site. Residues Ala275 to Glu353 enclose the PUA domain.

It belongs to the glutamate 5-kinase family.

It localises to the cytoplasm. The catalysed reaction is L-glutamate + ATP = L-glutamyl 5-phosphate + ADP. It participates in amino-acid biosynthesis; L-proline biosynthesis; L-glutamate 5-semialdehyde from L-glutamate: step 1/2. Catalyzes the transfer of a phosphate group to glutamate to form L-glutamate 5-phosphate. This is Glutamate 5-kinase from Erwinia tasmaniensis (strain DSM 17950 / CFBP 7177 / CIP 109463 / NCPPB 4357 / Et1/99).